The following is a 214-amino-acid chain: Adenylate kinase (214 aa).

Position 10–15 (10–15 (GAGKGT)) interacts with ATP. The NMP stretch occupies residues 30 to 59 (STGDMLRAAVKAGTPLGVKAQEIMIQGGLV). Residues Thr31, Arg36, 57-59 (GLV), 85-88 (GFPR), and Gln92 contribute to the AMP site. The tract at residues 126-163 (GRRSCSSCGKGYHLVFDPPLRAGVCDVCGSGLVQRADD) is LID. Residue Arg127 coordinates ATP. 4 residues coordinate Zn(2+): Cys130, Cys133, Cys150, and Cys153. AMP-binding residues include Arg160 and Arg171. Gly199 provides a ligand contact to ATP.

It belongs to the adenylate kinase family. In terms of assembly, monomer.

It localises to the cytoplasm. The enzyme catalyses AMP + ATP = 2 ADP. The protein operates within purine metabolism; AMP biosynthesis via salvage pathway; AMP from ADP: step 1/1. Functionally, catalyzes the reversible transfer of the terminal phosphate group between ATP and AMP. Plays an important role in cellular energy homeostasis and in adenine nucleotide metabolism. This is Adenylate kinase from Trichlorobacter lovleyi (strain ATCC BAA-1151 / DSM 17278 / SZ) (Geobacter lovleyi).